Reading from the N-terminus, the 291-residue chain is Nucleotide-binding protein LGAS_1315 (291 aa).

13-20 (GMSGAGKT) provides a ligand contact to ATP. 63-66 (DLRV) serves as a coordination point for GTP.

Belongs to the RapZ-like family.

In terms of biological role, displays ATPase and GTPase activities. The chain is Nucleotide-binding protein LGAS_1315 from Lactobacillus gasseri (strain ATCC 33323 / DSM 20243 / BCRC 14619 / CIP 102991 / JCM 1131 / KCTC 3163 / NCIMB 11718 / NCTC 13722 / AM63).